We begin with the raw amino-acid sequence, 554 residues long: Beta-eudesmol synthase (554 aa).

Residues Asp305, Asp309, and Glu456 each contribute to the Mg(2+) site. The short motif at 305-309 is the DDXXD motif element; the sequence is DDIYD.

Belongs to the terpene synthase family. It depends on Mg(2+) as a cofactor. Mn(2+) serves as cofactor. As to expression, expressed in rhizomes. Detected in stems, but not in leaves.

The protein resides in the cytoplasm. The catalysed reaction is (2E,6E)-farnesyl diphosphate + H2O = beta-eudesmol + diphosphate. It carries out the reaction (2E,6E)-farnesyl diphosphate + H2O = 10-epi-gamma-eudesmol + diphosphate. It catalyses the reaction (2E,6E)-farnesyl diphosphate + H2O = alpha-eudesmol + diphosphate. Its pathway is secondary metabolite biosynthesis; terpenoid biosynthesis. Functionally, involved in the biosynthesis of beta-eudesmol, a sesquiterpene with antifungal activity and responsible for resistance of plants to ant attack. Produces mainly beta-eudesmol, but also smaller amounts of 10-epi-gamma-eudesmol, alpha-eudesmol and aristolene. The protein is Beta-eudesmol synthase (ZSS2) of Zingiber zerumbet (Shampoo ginger).